Reading from the N-terminus, the 727-residue chain is Polyribonucleotide nucleotidyltransferase (727 aa).

D491 and D497 together coordinate Mg(2+). Positions 558 to 617 (PRIITASIHPDKIREVIGPGGKTIKKIIDETGVKIDIEDDGRVFISAVDGEAGENALKII) constitute a KH domain. Positions 627–701 (GRIYNGRVTR…KQGRLNLSRK (75 aa)) constitute an S1 motif domain. The segment at 698–727 (LSRKEALPNPNPSSNPNPNGITANRNPRNS) is disordered. Residues 717-727 (GITANRNPRNS) are compositionally biased toward polar residues.

This sequence belongs to the polyribonucleotide nucleotidyltransferase family. Mg(2+) serves as cofactor.

It localises to the cytoplasm. The enzyme catalyses RNA(n+1) + phosphate = RNA(n) + a ribonucleoside 5'-diphosphate. Involved in mRNA degradation. Catalyzes the phosphorolysis of single-stranded polyribonucleotides processively in the 3'- to 5'-direction. This Desulfitobacterium hafniense (strain Y51) protein is Polyribonucleotide nucleotidyltransferase.